The following is a 404-amino-acid chain: Cysteine desulfurase IscS (404 aa).

Pyridoxal 5'-phosphate-binding positions include 75 to 76 (AT), N155, Q183, and 203 to 205 (SGH). An N6-(pyridoxal phosphate)lysine modification is found at K206. Residue T243 coordinates pyridoxal 5'-phosphate. C328 (cysteine persulfide intermediate) is an active-site residue. C328 lines the [2Fe-2S] cluster pocket.

The protein belongs to the class-V pyridoxal-phosphate-dependent aminotransferase family. NifS/IscS subfamily. In terms of assembly, homodimer. Forms a heterotetramer with IscU, interacts with other sulfur acceptors. Pyridoxal 5'-phosphate is required as a cofactor.

It is found in the cytoplasm. It carries out the reaction (sulfur carrier)-H + L-cysteine = (sulfur carrier)-SH + L-alanine. It participates in cofactor biosynthesis; iron-sulfur cluster biosynthesis. Functionally, master enzyme that delivers sulfur to a number of partners involved in Fe-S cluster assembly, tRNA modification or cofactor biosynthesis. Catalyzes the removal of elemental sulfur atoms from cysteine to produce alanine. Functions as a sulfur delivery protein for Fe-S cluster synthesis onto IscU, an Fe-S scaffold assembly protein, as well as other S acceptor proteins. The chain is Cysteine desulfurase IscS from Actinobacillus succinogenes (strain ATCC 55618 / DSM 22257 / CCUG 43843 / 130Z).